The sequence spans 326 residues: Undecaprenyl-phosphate 4-deoxy-4-formamido-L-arabinose transferase (326 aa).

2 helical membrane passes run 235 to 255 and 270 to 290; these read LLSV…VLLI and VFTL…GMGL.

This sequence belongs to the glycosyltransferase 2 family.

Its subcellular location is the cell inner membrane. The enzyme catalyses UDP-4-deoxy-4-formamido-beta-L-arabinose + di-trans,octa-cis-undecaprenyl phosphate = 4-deoxy-4-formamido-alpha-L-arabinopyranosyl di-trans,octa-cis-undecaprenyl phosphate + UDP. It participates in glycolipid biosynthesis; 4-amino-4-deoxy-alpha-L-arabinose undecaprenyl phosphate biosynthesis; 4-amino-4-deoxy-alpha-L-arabinose undecaprenyl phosphate from UDP-4-deoxy-4-formamido-beta-L-arabinose and undecaprenyl phosphate: step 1/2. Its pathway is bacterial outer membrane biogenesis; lipopolysaccharide biosynthesis. Catalyzes the transfer of 4-deoxy-4-formamido-L-arabinose from UDP to undecaprenyl phosphate. The modified arabinose is attached to lipid A and is required for resistance to polymyxin and cationic antimicrobial peptides. This chain is Undecaprenyl-phosphate 4-deoxy-4-formamido-L-arabinose transferase, found in Serratia proteamaculans (strain 568).